We begin with the raw amino-acid sequence, 745 residues long: Single-minded homolog 1-A (745 aa).

Residues 1 to 53 enclose the bHLH domain; it reads MKEKSKNAGRTRREKENSEFYELAKLLPLPSAITSQSDKASIIRLTTSYLKMR. 2 consecutive PAS domains span residues 77–147 and 218–288; these read GREL…QPYH and PPSA…LVKG. The Single-minded C-terminal domain maps to 336–745; that stretch reads EYKGLQLSLD…GTSVIITNGS (410 aa). The span at 350 to 364 shows a compositional bias: polar residues; it reads TKPSFTYNSPSNPVT. Disordered stretches follow at residues 350–413 and 529–563; these read TKPS…LTDS and EDSAVSSAPDGGSASDSGDRFRADQCRSSPQEPSK. The Nuclear localization signal signature appears at 368–387; it reads RVGKSRVSRTKTKTRLSPYS. Residues 369 to 381 show a composition bias toward basic residues; it reads VGKSRVSRTKTKT. Residues 532-544 are compositionally biased toward low complexity; that stretch reads AVSSAPDGGSASD.

As to quaternary structure, efficient DNA binding requires dimerization with another bHLH protein. Heterodimer of sim1a and arnt. In terms of tissue distribution, expressed in embryonic forebrain at the eleven somite stage. Detected in brain throughout embryonic development.

It is found in the nucleus. In terms of biological role, transcriptional factor that may have pleiotropic effects during embryogenesis and in the adult. The sequence is that of Single-minded homolog 1-A (sim1a) from Danio rerio (Zebrafish).